Here is a 206-residue protein sequence, read N- to C-terminus: Outer-membrane lipoprotein carrier protein (206 aa).

A signal peptide spans 1–23 (MKPLFPMLTAAAIAAGLAAPAQA).

Belongs to the LolA family. As to quaternary structure, monomer.

The protein resides in the periplasm. Its function is as follows. Participates in the translocation of lipoproteins from the inner membrane to the outer membrane. Only forms a complex with a lipoprotein if the residue after the N-terminal Cys is not an aspartate (The Asp acts as a targeting signal to indicate that the lipoprotein should stay in the inner membrane). The polypeptide is Outer-membrane lipoprotein carrier protein (Chromobacterium violaceum (strain ATCC 12472 / DSM 30191 / JCM 1249 / CCUG 213 / NBRC 12614 / NCIMB 9131 / NCTC 9757 / MK)).